A 229-amino-acid chain; its full sequence is Ribonuclease HII (229 aa).

Positions 34 to 223 constitute an RNase H type-2 domain; the sequence is WPVAGADEAG…LRKSEDGPEM (190 aa). Positions 40, 41, and 131 each coordinate a divalent metal cation. Residues 209–229 form a disordered region; the sequence is MSFRPLRKSEDGPEMDELIPE. The segment covering 220 to 229 has biased composition (acidic residues); sequence GPEMDELIPE.

Belongs to the RNase HII family. It depends on Mn(2+) as a cofactor. Requires Mg(2+) as cofactor.

Its subcellular location is the cytoplasm. It carries out the reaction Endonucleolytic cleavage to 5'-phosphomonoester.. In terms of biological role, endonuclease that specifically degrades the RNA of RNA-DNA hybrids. This chain is Ribonuclease HII, found in Rhizobium etli (strain CIAT 652).